A 736-amino-acid polypeptide reads, in one-letter code: Catalase-peroxidase (736 aa).

The tract at residues 1-21 is disordered; the sequence is MSNEQKCPFSGTHGARTTVGT. Residues 96–224 constitute a cross-link (tryptophyl-tyrosyl-methioninium (Trp-Tyr) (with M-250)); it reads WHSAGTYRTG…LAAVQMGLIY (129 aa). The Proton acceptor role is filled by H97. The tryptophyl-tyrosyl-methioninium (Tyr-Met) (with W-96) cross-link spans 224–250; sequence YVNPEGPDGNPDPVASGRDIRETFARM. Residue H265 coordinates heme b.

It belongs to the peroxidase family. Peroxidase/catalase subfamily. In terms of assembly, homodimer or homotetramer. The cofactor is heme b. Post-translationally, formation of the three residue Trp-Tyr-Met cross-link is important for the catalase, but not the peroxidase activity of the enzyme.

It carries out the reaction H2O2 + AH2 = A + 2 H2O. It catalyses the reaction 2 H2O2 = O2 + 2 H2O. Bifunctional enzyme with both catalase and broad-spectrum peroxidase activity. This Dechloromonas aromatica (strain RCB) protein is Catalase-peroxidase.